Reading from the N-terminus, the 381-residue chain is Queuine tRNA-ribosyltransferase (381 aa).

The active-site Proton acceptor is Asp-96. Substrate contacts are provided by residues 96 to 100 (DSGGF), Asp-150, Gln-193, and Gly-220. The RNA binding stretch occupies residues 251 to 257 (GVGSPDA). Asp-270 acts as the Nucleophile in catalysis. The segment at 275–279 (TRIAR) is RNA binding; important for wobble base 34 recognition. Cys-308, Cys-310, Cys-313, and His-339 together coordinate Zn(2+).

The protein belongs to the queuine tRNA-ribosyltransferase family. As to quaternary structure, homodimer. Within each dimer, one monomer is responsible for RNA recognition and catalysis, while the other monomer binds to the replacement base PreQ1. Zn(2+) is required as a cofactor.

It catalyses the reaction 7-aminomethyl-7-carbaguanine + guanosine(34) in tRNA = 7-aminomethyl-7-carbaguanosine(34) in tRNA + guanine. It participates in tRNA modification; tRNA-queuosine biosynthesis. In terms of biological role, catalyzes the base-exchange of a guanine (G) residue with the queuine precursor 7-aminomethyl-7-deazaguanine (PreQ1) at position 34 (anticodon wobble position) in tRNAs with GU(N) anticodons (tRNA-Asp, -Asn, -His and -Tyr). Catalysis occurs through a double-displacement mechanism. The nucleophile active site attacks the C1' of nucleotide 34 to detach the guanine base from the RNA, forming a covalent enzyme-RNA intermediate. The proton acceptor active site deprotonates the incoming PreQ1, allowing a nucleophilic attack on the C1' of the ribose to form the product. After dissociation, two additional enzymatic reactions on the tRNA convert PreQ1 to queuine (Q), resulting in the hypermodified nucleoside queuosine (7-(((4,5-cis-dihydroxy-2-cyclopenten-1-yl)amino)methyl)-7-deazaguanosine). In Bacillus subtilis (strain 168), this protein is Queuine tRNA-ribosyltransferase.